The sequence spans 688 residues: Glycine--tRNA ligase beta subunit (688 aa).

It belongs to the class-II aminoacyl-tRNA synthetase family. As to quaternary structure, tetramer of two alpha and two beta subunits.

The protein localises to the cytoplasm. It carries out the reaction tRNA(Gly) + glycine + ATP = glycyl-tRNA(Gly) + AMP + diphosphate. The protein is Glycine--tRNA ligase beta subunit of Listeria monocytogenes serotype 4a (strain HCC23).